We begin with the raw amino-acid sequence, 417 residues long: Acetate kinase (417 aa).

N9 is a binding site for Mg(2+). K16 is a binding site for ATP. R90 is a binding site for substrate. The active-site Proton donor/acceptor is D147. ATP is bound by residues 207–211 (HIGNG), 282–284 (DLR), and 330–334 (GIGEN). E384 provides a ligand contact to Mg(2+).

Belongs to the acetokinase family. Homodimer. The cofactor is Mg(2+). Mn(2+) is required as a cofactor.

It localises to the cytoplasm. It carries out the reaction acetate + ATP = acetyl phosphate + ADP. Its pathway is metabolic intermediate biosynthesis; acetyl-CoA biosynthesis; acetyl-CoA from acetate: step 1/2. Its function is as follows. Catalyzes the formation of acetyl phosphate from acetate and ATP. Can also catalyze the reverse reaction. This is Acetate kinase from Staphylococcus epidermidis (strain ATCC 35984 / DSM 28319 / BCRC 17069 / CCUG 31568 / BM 3577 / RP62A).